Consider the following 1307-residue polypeptide: Light-sensor Protein kinase (1307 aa).

One can recognise a GAF domain in the interval 215–394; it reads DIELLCDTIV…VFGMQLNLHV (180 aa). Cys320 contributes to the phytochromobilin binding site. Residues 609-680 form the PAS domain; that stretch reads LANEMSRVLE…RLLSLALQGE (72 aa). Residues 683–739 enclose the PAC domain; it reads QNVEIKLKTFGTQTTERAVILIVNACCSRDASDFVVGVFFVGQDVTEQRMFMDRFTR. The interval 779 to 1003 is hinge; sequence DHATGSVERL…WSFSEKFFQW (225 aa). Residues 1004-1307 form the Protein kinase domain; it reads IQITGSLGSG…DSYPSTEEPS (304 aa). ATP is bound by residues 1010 to 1018 and Lys1031; that span reads LGSGSSATV. Residue Asp1127 is part of the active site.

This sequence in the N-terminal section; belongs to the phytochrome family. The protein in the C-terminal section; belongs to the protein kinase superfamily. Ser/Thr protein kinase family. In terms of assembly, homodimer. Post-translationally, contains one covalently linked phytochromobilin chromophore.

The protein resides in the cell membrane. It catalyses the reaction L-seryl-[protein] + ATP = O-phospho-L-seryl-[protein] + ADP + H(+). The enzyme catalyses L-threonyl-[protein] + ATP = O-phospho-L-threonyl-[protein] + ADP + H(+). Its function is as follows. Regulatory photoreceptor which exists in two forms that are reversibly interconvertible by light: the Pr form that absorbs maximally in the red region of the spectrum and the Pfr form that absorbs maximally in the far-red region. Photoconversion of Pr to Pfr induces an array of morphogenic responses, whereas reconversion of Pfr to Pr cancels the induction of those responses. Pfr controls the expression of a number of nuclear genes including those encoding the small subunit of ribulose-bisphosphate carboxylase, chlorophyll A/B binding protein, protochlorophyllide reductase, rRNA, etc. It also controls the expression of its own gene(s) in a negative feedback fashion. The protein is Light-sensor Protein kinase (PHY1) of Ceratodon purpureus (Fire moss).